Consider the following 443-residue polypeptide: Cobyrinate a,c-diamide synthase (443 aa).

In terms of domain architecture, GATase cobBQ-type spans 244 to 435 (KVSVAMDSAF…AHIHFLSNPR (192 aa)). The active-site Nucleophile is C327.

This sequence belongs to the CobB/CbiA family. Requires Mg(2+) as cofactor.

It catalyses the reaction cob(II)yrinate + 2 L-glutamine + 2 ATP + 2 H2O = cob(II)yrinate a,c diamide + 2 L-glutamate + 2 ADP + 2 phosphate + 2 H(+). Its pathway is cofactor biosynthesis; adenosylcobalamin biosynthesis; cob(II)yrinate a,c-diamide from sirohydrochlorin (anaerobic route): step 10/10. Catalyzes the ATP-dependent amidation of the two carboxylate groups at positions a and c of cobyrinate, using either L-glutamine or ammonia as the nitrogen source. In Thermoplasma acidophilum (strain ATCC 25905 / DSM 1728 / JCM 9062 / NBRC 15155 / AMRC-C165), this protein is Cobyrinate a,c-diamide synthase.